The chain runs to 380 residues: SAM and SH3 domain-containing protein 3 (380 aa).

The segment at 1 to 76 is disordered; that stretch reads MLRRKPSNAS…KSGKKLGKKW (76 aa). The segment covering 22–41 has biased composition (low complexity); sequence LQRSSSFKDFAKSKPSSPVV. A phosphoserine mark is found at Ser27, Ser34, and Ser42. Thr61 carries the post-translational modification Phosphothreonine. Ser97 is subject to Phosphoserine. Disordered stretches follow at residues 98-174, 237-256, and 318-380; these read EEMA…TGPF, VGHA…KPKT, and TGSE…AGAP. Thr103 is subject to Phosphothreonine. Ser110 is modified (phosphoserine). Thr112 is subject to Phosphothreonine. Ser113 bears the Phosphoserine mark. Tyr116 is subject to Phosphotyrosine. The residue at position 120 (Ser120) is a Phosphoserine. Residues 143–152 show a composition bias toward polar residues; the sequence is RQASTGSELC. The segment covering 153–164 has biased composition (low complexity); it reads SPSPGSGSFGEE. Positions 173 to 234 constitute an SH3 domain; the sequence is PFCGRARVHT…KFIYVDVLPE (62 aa). The span at 241-255 shows a compositional bias: basic residues; sequence RPSRRQSKGKRPKPK. The region spanning 252–316 is the SAM domain; the sequence is PKPKTLHELL…LTAAELLLDY (65 aa). Thr318 is modified (phosphothreonine). Residues 318–327 are compositionally biased toward acidic residues; that stretch reads TGSEEAEEGA. At Ser320 the chain carries Phosphoserine.

In terms of biological role, may function as a signaling adapter protein in lymphocytes. The protein is SAM and SH3 domain-containing protein 3 (SASH3) of Homo sapiens (Human).